Consider the following 398-residue polypeptide: MKHNNKVSKRLTMTWVPLLCISCFFLGAIFTSKLRSASSDSGSQLILQHRRDQELKIVTQDYAHEKKKSQDNDVMEEVLKTHKAIESLDKSVSMLQKQLSATHSPQQIVNVSATNSSTEGNQKNKVFMVIGINTAFSSRKRRDSLRETWMPQGEKLEKLEKEKGIVVKFMIGHSSTPNSMLDKEIDSEDAQYNDFFRLDHVEGYYNLSAKTKSFFSSAVAKWDAEFYVKIDDDVHVNLGTLASTLASHRSKPRVYIGCMKSGPVLTKKTAKYREPEFWKFGEEGNKYFRHATGQIYAISKDLATYISNNQPILHKYANEDVTLGSWFIGLEVEQIDDRNFCCGTPPDCEMRAEAGEMCVATFDWKCSGVCRSVDRMWMVHVMCGEGSKAVWDANLKLS.

A helical; Signal-anchor for type II membrane protein transmembrane segment spans residues 11 to 31 (LTMTWVPLLCISCFFLGAIFT). N-linked (GlcNAc...) asparagine glycans are attached at residues Asn-110, Asn-115, and Asn-206.

This sequence belongs to the glycosyltransferase 31 family. Requires Mn(2+) as cofactor.

The protein resides in the golgi apparatus membrane. The protein operates within protein modification; protein glycosylation. Beta-1,3-galactosyltransferase that transfers galactose from UDP-galactose to substrates with a terminal glycosyl residue. This Arabidopsis thaliana (Mouse-ear cress) protein is Probable beta-1,3-galactosyltransferase 5 (B3GALT5).